We begin with the raw amino-acid sequence, 124 residues long: Small ribosomal subunit protein uS12 (124 aa).

Residue Asp-89 is modified to 3-methylthioaspartic acid.

It belongs to the universal ribosomal protein uS12 family. Part of the 30S ribosomal subunit. Contacts proteins S8 and S17. May interact with IF1 in the 30S initiation complex.

Its function is as follows. With S4 and S5 plays an important role in translational accuracy. Functionally, interacts with and stabilizes bases of the 16S rRNA that are involved in tRNA selection in the A site and with the mRNA backbone. Located at the interface of the 30S and 50S subunits, it traverses the body of the 30S subunit contacting proteins on the other side and probably holding the rRNA structure together. The combined cluster of proteins S8, S12 and S17 appears to hold together the shoulder and platform of the 30S subunit. This chain is Small ribosomal subunit protein uS12, found in Sodalis glossinidius (strain morsitans).